The chain runs to 160 residues: Cytochrome c-type biogenesis protein CcmE (160 aa).

Topologically, residues Met-1 to Arg-9 are cytoplasmic. Residues Ile-10–Ala-30 form a helical; Signal-anchor for type II membrane protein membrane-spanning segment. Over Met-31 to Ser-160 the chain is Periplasmic. The heme site is built by His-123 and Tyr-127. Residues Val-141–Ser-160 form a disordered region.

The protein belongs to the CcmE/CycJ family.

The protein resides in the cell inner membrane. In terms of biological role, heme chaperone required for the biogenesis of c-type cytochromes. Transiently binds heme delivered by CcmC and transfers the heme to apo-cytochromes in a process facilitated by CcmF and CcmH. The sequence is that of Cytochrome c-type biogenesis protein CcmE from Dinoroseobacter shibae (strain DSM 16493 / NCIMB 14021 / DFL 12).